The following is a 115-amino-acid chain: NADH-ubiquinone oxidoreductase chain 3 (115 aa).

The next 3 helical transmembrane spans lie at 3-23 (IMIT…IAFW), 55-75 (FFLV…LLPL), and 87-107 (MLTT…YEWL).

It belongs to the complex I subunit 3 family. Core subunit of respiratory chain NADH dehydrogenase (Complex I) which is composed of 45 different subunits. Interacts with TMEM186. Interacts with TMEM242.

The protein resides in the mitochondrion inner membrane. It carries out the reaction a ubiquinone + NADH + 5 H(+)(in) = a ubiquinol + NAD(+) + 4 H(+)(out). Its function is as follows. Core subunit of the mitochondrial membrane respiratory chain NADH dehydrogenase (Complex I) which catalyzes electron transfer from NADH through the respiratory chain, using ubiquinone as an electron acceptor. Essential for the catalytic activity of complex I. This Dasypus novemcinctus (Nine-banded armadillo) protein is NADH-ubiquinone oxidoreductase chain 3.